Here is a 345-residue protein sequence, read N- to C-terminus: NADPH-dependent curcumin reductase (345 aa).

Over residues 1 to 10 (MGQQKQRNRR) the composition is skewed to basic residues. The tract at residues 1–24 (MGQQKQRNRRWVLASRPHGAPVPE) is disordered. NADP(+)-binding residues include K186, N225, and N333.

As to quaternary structure, homodimer.

The enzyme catalyses tetrahydrocurcumin + 2 NADP(+) = curcumin + 2 NADPH + 2 H(+). The catalysed reaction is tetrahydrocurcumin + NADP(+) = dihydrocurcumin + NADPH + H(+). It catalyses the reaction dihydrocurcumin + NADP(+) = curcumin + NADPH + H(+). Inhibited by thiol-specific reagents (p-chloromercuribenzoate and 5,5'-dithio-bis-2-nitrobenzoate). Functionally, catalyzes the metal-independent reduction of curcumin to dihydrocurcumin (DHC) as an intermediate product, followed by further reduction to tetrahydrocurcumin (THC) as an end product. It also acts on 3-octene-2-one, 3-hepten-2-one, resveratrol, and trans-2-octenal. The chain is NADPH-dependent curcumin reductase from Escherichia coli (strain K12).